The chain runs to 397 residues: Lysophospholipid transporter LplT (397 aa).

The Periplasmic segment spans residues 1–17; that stretch reads MSESVHTNTSLWSKGMK. The helical transmembrane segment at 18 to 38 threads the bilayer; sequence AVIVAQFLSAFGDNALLFATL. At 39 to 52 the chain is on the cytoplasmic side; sequence ALLKAQFYPEWSQP. The helical transmembrane segment at 53–73 threads the bilayer; that stretch reads ILQMVFVGAYILFAPFVGQVA. Residues 74-90 are Periplasmic-facing; the sequence is DSFAKGRVMMFANGLKL. The chain crosses the membrane as a helical span at residues 91-111; that stretch reads LGAASICFGINPFLGYTLVGV. At 112–144 the chain is on the cytoplasmic side; the sequence is GAAAYSPAKYGILGELTTGSKLVKANGLMEAST. A helical transmembrane segment spans residues 145-165; that stretch reads IAAILLGSVAGGVLADWHVLV. Residue alanine 166 is a topological domain, periplasmic. The helical transmembrane segment at 167–187 threads the bilayer; the sequence is LAACALAYGGAVVANIYIPKL. At 188–226 the chain is on the cytoplasmic side; it reads AAARPGQSWNLINMTRSFLNACTSLWRNGETRFSLVGTS. A helical transmembrane segment spans residues 227–247; the sequence is LFWGAGVTLRFLLVLWVPVAL. At 248 to 256 the chain is on the periplasmic side; sequence GITDNATPT. Residues 257–277 form a helical membrane-spanning segment; the sequence is YLNAMVAIGIVVGAGAAAKLV. Residues 278 to 280 lie on the Cytoplasmic side of the membrane; that stretch reads TLE. A helical transmembrane segment spans residues 281–301; that stretch reads TVSRCMPAGILIGVVVLIFSL. The Periplasmic segment spans residues 302 to 304; that stretch reads QHE. A helical membrane pass occupies residues 305–325; that stretch reads LLPAYALLMLIGVLGGFFVVP. Residues 326–343 are Cytoplasmic-facing; that stretch reads LNALLQERGKKSVGAGNA. The chain crosses the membrane as a helical span at residues 344 to 364; that stretch reads IAVQNLGENSAMLLMLGIYSL. The Periplasmic portion of the chain corresponds to 365–366; that stretch reads AV. A helical membrane pass occupies residues 367–387; sequence MVGIPVVPIGIGFGALFALAI. Topologically, residues 388–397 are cytoplasmic; that stretch reads TALWIWQRRY.

The protein belongs to the major facilitator superfamily. LplT (TC 2.A.1.42) family.

The protein localises to the cell inner membrane. Its function is as follows. Catalyzes the facilitated diffusion of 2-acyl-glycero-3-phosphoethanolamine (2-acyl-GPE) into the cell. The sequence is that of Lysophospholipid transporter LplT from Escherichia coli O127:H6 (strain E2348/69 / EPEC).